The primary structure comprises 179 residues: NADH-quinone oxidoreductase subunit B 1 (179 aa).

[4Fe-4S] cluster is bound by residues C38, C39, C104, and C133.

This sequence belongs to the complex I 20 kDa subunit family. NDH-1 is composed of 14 different subunits. Subunits NuoB, C, D, E, F, and G constitute the peripheral sector of the complex. Requires [4Fe-4S] cluster as cofactor.

It is found in the cell membrane. It carries out the reaction a quinone + NADH + 5 H(+)(in) = a quinol + NAD(+) + 4 H(+)(out). Functionally, NDH-1 shuttles electrons from NADH, via FMN and iron-sulfur (Fe-S) centers, to quinones in the respiratory chain. The immediate electron acceptor for the enzyme in this species is believed to be ubiquinone. Couples the redox reaction to proton translocation (for every two electrons transferred, four hydrogen ions are translocated across the cytoplasmic membrane), and thus conserves the redox energy in a proton gradient. The protein is NADH-quinone oxidoreductase subunit B 1 of Herpetosiphon aurantiacus (strain ATCC 23779 / DSM 785 / 114-95).